Here is a 416-residue protein sequence, read N- to C-terminus: Tiggy-winkle hedgehog protein (416 aa).

The first 26 residues, 1–26 (MDVRLHLKQFALLCFISLLLTPCGLA), serve as a signal peptide directing secretion. Residue cysteine 27 is the site of N-palmitoyl cysteine attachment. Positions 92, 93, 98, 128, 129, 132, and 134 each coordinate Ca(2+). Zn(2+) contacts are provided by histidine 143, aspartate 150, and histidine 185. Glycine 200 carries the Cholesterol glycine ester lipid modification.

This sequence belongs to the hedgehog family. Multimer. In terms of assembly, interacts with HHATL/GUP1 which negatively regulates HHAT-mediated palmitoylation of the TWHH N-terminus. Interacts with BOC and CDON. Interacts with HHIP. Interacts with DISP1 via its cholesterol anchor. Interacts with SCUBE2. In terms of processing, the C-terminal domain displays an autoproteolysis activity and a cholesterol transferase activity. Both activities result in the cleavage of the full-length protein into two parts (N-product and C-product) followed by the covalent attachment of a cholesterol moiety to the C-terminal of the newly generated N-product. Cholesterylation is required for the tiggy-winkle hedgehog protein N-product targeting to lipid rafts and multimerization. N-product is the active species in both local and long-range signaling, whereas the C-product is degraded in the endoplasmic reticulum. Post-translationally, N-palmitoylation by HHAT of N-product is required for tiggy-winkle hedgehog protein N-product multimerization and full activity. It is a prerequisite for the membrane-proximal positioning and the subsequent shedding of this N-terminal peptide. The lipidated N- and C-terminal peptides of N-product can be cleaved (shedding). The N-terminal palmitoylated peptide is cleaved at the Cardin-Weintraub (CW) motif site. The cleavage reduced the interactions with heparan sulfate. The cleavage is enhanced by SCUBE2. As to expression, expressed in the ventral midline of the neural tube and brain. In the developing brain, expression occurs in domains that include a discrete region in the floor of the diencephalon. Not detected in the notochord or developing fin bud.

The protein localises to the cell membrane. It is found in the endoplasmic reticulum membrane. Its subcellular location is the golgi apparatus membrane. The C-terminal part of the tiggy-winkle hedgehog protein precursor displays an autoproteolysis and a cholesterol transferase activity. Both activities result in the cleavage of the full-length protein into two parts (N-product and C-product) followed by the covalent attachment of a cholesterol moiety to the C-terminal of the newly generated N-product. Both activities occur in the endoplasmic reticulum. Once cleaved, the C-product is degraded in the endoplasmic reticulum. Its function is as follows. The dually lipidated tiggy-winkle hedgehog protein N-product is a morphogen which is essential for a variety of patterning events during development. Involved in dorso-ventral patterning of the brain and in early patterning of the developing eyes. Binds to the patched (PTCH1) receptor, which functions in association with smoothened (SMO), to activate the transcription of target genes. The polypeptide is Tiggy-winkle hedgehog protein (shhb) (Danio rerio (Zebrafish)).